The primary structure comprises 375 residues: Carboxypeptidase O (375 aa).

The N-terminal stretch at 1–20 (MKPLLGTFYLLGMLVPGWLG) is a signal peptide. In terms of domain architecture, Peptidase M14 spans 50 to 345 (RYHPMGEIYQ…EAVLSVLDDV (296 aa)). Histidine 109 and glutamate 112 together coordinate Zn(2+). N-linked (GlcNAc...) asparagine glycosylation is present at asparagine 175. A Zn(2+)-binding site is contributed by histidine 237. Asparagine 252 is a glycosylation site (N-linked (GlcNAc...) asparagine). Residue glutamate 311 is the Proton donor/acceptor of the active site. Asparagine 315 is a glycosylation site (N-linked (GlcNAc...) asparagine). Serine 354 carries the GPI-anchor amidated serine lipid modification. Residues 355 to 375 (ARKAKSTALVLGLLMSFMSLL) constitute a propeptide, removed in mature form.

This sequence belongs to the peptidase M14 family. Zn(2+) is required as a cofactor.

It localises to the apical cell membrane. In terms of biological role, carboxypeptidase which preferentially cleaves C-terminal acidic residues from peptides and proteins. Can also cleave C-terminal hydrophobic amino acids, with a preference for small residues over large residues. In Bos taurus (Bovine), this protein is Carboxypeptidase O.